The chain runs to 337 residues: MALPLSDPNAPEFTRRYVNLADPRLGAQALEASDDFFAPKERMLNPEPAVFIPGKYDDHGKWMDGWETRRKRTTGYDWCVVKLARPGVIKGVDIDTSHFTGNFPPAASIEAAHVPDGAPNEATKWVEIVPATTLQGNSHHYVEARDANAYTHLRVNLYPDGGIARLRVYGQPQLDWAGASRSALFDLAAMENGGYVVAANNQHFGLASNVLLPGRGVNMGDGWETRRRREPGNDWAIVALAQPGVIRKVEIDTAHFKGNYPDRCSIQAAYVQGGTDSSLVTQAMFWPVLLGEQKLQMDKQHAFEAELAALGPVTHVRLNIIPDGGVSRLRVWGTLDK.

The protein belongs to the allantoicase family.

The catalysed reaction is allantoate + H2O = (S)-ureidoglycolate + urea. It functions in the pathway nitrogen metabolism; (S)-allantoin degradation; (S)-ureidoglycolate from allantoate (aminidohydrolase route): step 1/1. In Burkholderia mallei (strain ATCC 23344), this protein is Probable allantoicase 1.